Consider the following 464-residue polypeptide: Ubiquinone biosynthesis monooxygenase COQ6, mitochondrial (464 aa).

The N-terminal 24 residues, 1-24 (MRCLGGSSLSRLLRMLSQSQGRAL), are a transit peptide targeting the mitochondrion.

The protein belongs to the UbiH/COQ6 family. In terms of assembly, component of a multi-subunit COQ enzyme complex, composed of at least coq3, coq4, coq5, coq6, coq7 and coq9. Interacts with coq8b and coq7. FAD is required as a cofactor.

It is found in the mitochondrion inner membrane. The protein resides in the golgi apparatus. It localises to the cell projection. It catalyses the reaction a 4-hydroxy-3-(all-trans-polyprenyl)benzoate + 2 reduced [2Fe-2S]-[ferredoxin] + O2 + 2 H(+) = a 3,4-dihydroxy-5-(all-trans-polyprenyl)benzoate + 2 oxidized [2Fe-2S]-[ferredoxin] + H2O. The catalysed reaction is a 2-methoxy-6-(all-trans-polyprenyl)phenol + 2 reduced [2Fe-2S]-[ferredoxin] + O2 + 2 H(+) = a 2-methoxy-6-(all-trans-polyprenyl)benzene-1,4-diol + 2 oxidized [2Fe-2S]-[ferredoxin] + H2O. The protein operates within cofactor biosynthesis; ubiquinone biosynthesis. Functionally, FAD-dependent monooxygenase required for two non-consecutive steps during ubiquinone biosynthesis. Required for the C5-ring hydroxylation during ubiquinone biosynthesis by catalyzing the hydroxylation of 4-hydroxy-3-(all-trans-polyprenyl)benzoic acid to 3,4-dihydroxy-5-(all-trans-polyprenyl)benzoic acid. Also acts downstream of coq4, for the C1-hydroxylation during ubiquinone biosynthesis by catalyzing the hydroxylation of 2-methoxy-6-(all-trans-polyprenyl)phenol to 2-methoxy-6-(all-trans-polyprenyl)benzene-1,4-diol. The electrons required for the hydroxylation reaction are funneled indirectly to coq6 from NADPH via a ferredoxin/ferredoxin reductase system. The chain is Ubiquinone biosynthesis monooxygenase COQ6, mitochondrial from Xenopus tropicalis (Western clawed frog).